Consider the following 266-residue polypeptide: Electron transfer flavoprotein subunit beta (266 aa).

It belongs to the ETF beta-subunit/FixA family. Heterodimer of an alpha and a beta subunit. FAD serves as cofactor. AMP is required as a cofactor.

Its function is as follows. The electron transfer flavoprotein serves as a specific electron acceptor for other dehydrogenases. It transfers the electrons to the main respiratory chain via ETF-ubiquinone oxidoreductase (ETF dehydrogenase). The sequence is that of Electron transfer flavoprotein subunit beta (etfB) from Mycobacterium bovis (strain ATCC BAA-935 / AF2122/97).